The primary structure comprises 298 residues: Fe(II)/2-oxoglutarate-dependent dioxygenase nvfF (298 aa).

Residues His137, Asp139, and His212 each coordinate Fe cation.

It belongs to the PhyH family. As to quaternary structure, homodimer. The cofactor is Fe cation.

It carries out the reaction fumigatonoid C + 2-oxoglutarate + O2 = novofumigatonin + succinate + CO2 + H2O. The protein operates within secondary metabolite biosynthesis; terpenoid biosynthesis. Its function is as follows. Fe(II)/2-oxoglutarate-dependent dioxygenase; part of the gene cluster that mediates the biosynthesis of novofumigatonin, a heavily oxygenated meroterpenoid containing a unique orthoester moiety. The first step of the pathway is the synthesis of 3,5-dimethylorsellinic acid (DMOA) by the polyketide synthase nvfA via condensation of one acetyl-CoA starter unit with 3 malonyl-CoA units and 2 methylations. DMOA is then converted to farnesyl-DMOA by the farnesyltransferase nvfB. Epoxydation by FAD-dependent monooxygenase nvfK, followed by a protonation-initiated cyclization catalyzed by the terpene cyclase nvfL leads to the production of asnavolin H. The short chain dehydrogenase nvfC then as a 3-OH dehydrogenase of asnovolin H to yield chemesin D. There are two branches to synthesize asnovolin A from chemesin D. In one branch, chemesin D undergoes Baeyer-Villiger oxidation by nvfH, methylation by nvfJ, and enoyl reduction by the nvfM D enoylreductase that reduces the double bond between C-5'and C-6', to form respectively asnovolin I, asnovolin K, and asnovolin A. In the other branch, the methylation precedes the Baeyer-Villiger oxidation and the enoyl reduction to yield asnovolin A via the asnovolin J intermediate. Asnovolin A is further converted to fumigatonoid A by the Fe(II)/2-oxoglutarate-dependent dioxygenase nvfI that catalyzes an endoperoxidation reaction. The alpha/beta hydrolase nvfD then acts as an epimerase that converts fumigatonoid A to its C-5' epimer, which then undergoes spontaneous or nvfD-catalyzed lactonization. The following step utilizes the ketoreductase nvfG to produce fumigatonoid B. The dioxygenase nvfE further converts fumigatonoid B into fumigatonoid C. Finally the Fe(II)/2-oxoglutarate-dependent dioxygenase nvfF catalyzes two rounds of oxidation to transform fumigatonoid C into the end product, novofumigatonin A. The polypeptide is Fe(II)/2-oxoglutarate-dependent dioxygenase nvfF (Aspergillus novofumigatus (strain IBT 16806)).